Here is a 137-residue protein sequence, read N- to C-terminus: Small ribosomal subunit protein uS11A (137 aa).

S2 is subject to N-acetylserine. Positions 117–137 are disordered; that stretch reads DVTPVPSDSTRKKGGRRGRRL. Basic residues predominate over residues 128–137; that stretch reads KKGGRRGRRL.

It belongs to the universal ribosomal protein uS11 family. In terms of assembly, component of the small ribosomal subunit (SSU). Mature yeast ribosomes consist of a small (40S) and a large (60S) subunit. The 40S small subunit contains 1 molecule of ribosomal RNA (18S rRNA) and 33 different proteins (encoded by 57 genes). The large 60S subunit contains 3 rRNA molecules (25S, 5.8S and 5S rRNA) and 46 different proteins (encoded by 81 genes). uS11 interacts with eS1 forming part of the mRNA exit tunnel. uS11 interacts with snoRNA U3. uS11 interacts with MPP10. Component of the ribosomal small subunit (SSU) processome composed of at least 40 protein subunits and snoRNA U3. N-terminally acetylated by acetyltransferase NatA.

It localises to the cytoplasm. It is found in the nucleus. The protein localises to the nucleolus. In terms of biological role, component of the ribosome, a large ribonucleoprotein complex responsible for the synthesis of proteins in the cell. The small ribosomal subunit (SSU) binds messenger RNAs (mRNAs) and translates the encoded message by selecting cognate aminoacyl-transfer RNA (tRNA) molecules. The large subunit (LSU) contains the ribosomal catalytic site termed the peptidyl transferase center (PTC), which catalyzes the formation of peptide bonds, thereby polymerizing the amino acids delivered by tRNAs into a polypeptide chain. The nascent polypeptides leave the ribosome through a tunnel in the LSU and interact with protein factors that function in enzymatic processing, targeting, and the membrane insertion of nascent chains at the exit of the ribosomal tunnel. uS11 is involved in nucleolar processing of pre-18S ribosomal RNA and ribosome assembly. This Saccharomyces cerevisiae (strain ATCC 204508 / S288c) (Baker's yeast) protein is Small ribosomal subunit protein uS11A.